The chain runs to 413 residues: Putative ankyrin repeat protein L92 (413 aa).

ANK repeat units follow at residues 1–28, 32–67, 68–104, 105–134, 137–170, 174–208, 212–242, and 246–275; these read MCAC…DINC, DGMS…DVNL, TVDG…LFES, DDDD…NIEA, DGET…KTNI, DRKT…NINY, IGET…NPNI, and SGNT…SPEI.

This Acanthamoeba polyphaga mimivirus (APMV) protein is Putative ankyrin repeat protein L92.